A 1052-amino-acid polypeptide reads, in one-letter code: Eukaryotic translation initiation factor 3 subunit A (1052 aa).

Residues 92–121 adopt a coiled-coil conformation; it reads LKKFIELAEKKVTEAQAKADEIQSSLESAA. One can recognise a PCI domain in the interval 339-523; that stretch reads MTKAASFVLL…GVLTFDTDVF (185 aa). The stretch at 580–906 forms a coiled coil; sequence EARLQAKRAA…AEARRAARRT (327 aa). 2 stretches are compositionally biased toward basic and acidic residues: residues 617 to 632 and 794 to 901; these read AATD…EETR and KEVS…EARR. 2 disordered regions span residues 617 to 646 and 794 to 1052; these read AATD…AEKQ and KEVS…QGGQ. 2 stretches are compositionally biased toward low complexity: residues 905-927 and 948-964; these read RTGG…TAPR and KEAA…AAPE. Residues 1013–1028 show a composition bias toward polar residues; that stretch reads GSSQPPSRTQTPGSSS.

It belongs to the eIF-3 subunit A family. In terms of assembly, component of the eukaryotic translation initiation factor 3 (eIF-3) complex.

It is found in the cytoplasm. Its function is as follows. RNA-binding component of the eukaryotic translation initiation factor 3 (eIF-3) complex, which is involved in protein synthesis of a specialized repertoire of mRNAs and, together with other initiation factors, stimulates binding of mRNA and methionyl-tRNAi to the 40S ribosome. The eIF-3 complex specifically targets and initiates translation of a subset of mRNAs involved in cell proliferation. The protein is Eukaryotic translation initiation factor 3 subunit A (tif32) of Aspergillus niger (strain ATCC MYA-4892 / CBS 513.88 / FGSC A1513).